Reading from the N-terminus, the 484-residue chain is Adenylosuccinate lyase (484 aa).

Ala-2 is modified (N-acetylalanine). Substrate-binding positions include 20-21 (RY), 85-87 (RHD), and 111-112 (TS). Lys-147 bears the N6-acetyllysine mark. The active-site Proton donor/acceptor is His-159. Position 241 (Gln-241) interacts with substrate. Ser-289 (proton donor/acceptor) is an active-site residue. Lys-295 bears the N6-acetyllysine mark. Residues Arg-303, Arg-329, Ser-334, and Arg-338 each contribute to the substrate site. A Glycyl lysine isopeptide (Lys-Gly) (interchain with G-Cter in SUMO1) cross-link involves residue Lys-415.

It belongs to the lyase 1 family. Adenylosuccinate lyase subfamily. In terms of assembly, homotetramer. Residues from neighboring subunits contribute catalytic and substrate-binding residues to each active site.

It carries out the reaction N(6)-(1,2-dicarboxyethyl)-AMP = fumarate + AMP. The enzyme catalyses (2S)-2-[5-amino-1-(5-phospho-beta-D-ribosyl)imidazole-4-carboxamido]succinate = 5-amino-1-(5-phospho-beta-D-ribosyl)imidazole-4-carboxamide + fumarate. Its pathway is purine metabolism; AMP biosynthesis via de novo pathway; AMP from IMP: step 2/2. It participates in purine metabolism; IMP biosynthesis via de novo pathway; 5-amino-1-(5-phospho-D-ribosyl)imidazole-4-carboxamide from 5-amino-1-(5-phospho-D-ribosyl)imidazole-4-carboxylate: step 2/2. Its function is as follows. Catalyzes two non-sequential steps in de novo AMP synthesis: converts (S)-2-(5-amino-1-(5-phospho-D-ribosyl)imidazole-4-carboxamido)succinate (SAICAR) to fumarate plus 5-amino-1-(5-phospho-D-ribosyl)imidazole-4-carboxamide, and thereby also contributes to de novo IMP synthesis, and converts succinyladenosine monophosphate (SAMP) to AMP and fumarate. The chain is Adenylosuccinate lyase (ADSL) from Macaca fascicularis (Crab-eating macaque).